A 249-amino-acid chain; its full sequence is NH(3)-dependent NAD(+) synthetase (249 aa).

29–36 (GVSGGVDS) provides a ligand contact to ATP. Asp-35 lines the Mg(2+) pocket. Arg-116 is a deamido-NAD(+) binding site. Thr-136 lines the ATP pocket. Glu-141 is a binding site for Mg(2+). Residues Lys-149 and Asp-156 each coordinate deamido-NAD(+). Lys-165 and Ser-187 together coordinate ATP. 233–234 (HK) is a deamido-NAD(+) binding site.

This sequence belongs to the NAD synthetase family. In terms of assembly, homodimer.

The enzyme catalyses deamido-NAD(+) + NH4(+) + ATP = AMP + diphosphate + NAD(+) + H(+). The protein operates within cofactor biosynthesis; NAD(+) biosynthesis; NAD(+) from deamido-NAD(+) (ammonia route): step 1/1. Functionally, catalyzes the ATP-dependent amidation of deamido-NAD to form NAD. Uses ammonia as a nitrogen source. This Syntrophomonas wolfei subsp. wolfei (strain DSM 2245B / Goettingen) protein is NH(3)-dependent NAD(+) synthetase.